We begin with the raw amino-acid sequence, 487 residues long: ATP-dependent rRNA helicase RRP3 (487 aa).

Residues 22-67 (IKRKALEKQQQAHANEPSPSDEDSAQSNSKDSNSNEQPEESEEIFE) are disordered. The short motif at 67–95 (ESFTELDLVPELIEACKNLNYNKPTPIQS) is the Q motif element. The Helicase ATP-binding domain maps to 98–270 (IPPALKGSDI…RASLTNPVKC (173 aa)). 111–118 (AQTGSGKT) provides a ligand contact to ATP. Positions 217 to 220 (DEAD) match the DEAD box motif. The Helicase C-terminal domain occupies 298–442 (LIYLLNEFIG…ENVDKDAILA (145 aa)). The interval 459–487 (NRRNKEKQARGKGRRGRMATRDNMDREER) is disordered. Residues 477-487 (ATRDNMDREER) show a composition bias toward basic and acidic residues.

It belongs to the DEAD box helicase family. DDX47/RRP3 subfamily. As to quaternary structure, interacts with the SSU processome.

The protein resides in the nucleus. The enzyme catalyses ATP + H2O = ADP + phosphate + H(+). Its function is as follows. ATP-dependent rRNA helicase required for pre-ribosomal RNA processing. Involved in the maturation of the 35S-pre-rRNA and to its cleavage to mature 18S rRNA. This Kluyveromyces lactis (strain ATCC 8585 / CBS 2359 / DSM 70799 / NBRC 1267 / NRRL Y-1140 / WM37) (Yeast) protein is ATP-dependent rRNA helicase RRP3.